A 262-amino-acid polypeptide reads, in one-letter code: Acyl-[acyl-carrier-protein]--UDP-N-acetylglucosamine O-acyltransferase (262 aa).

It belongs to the transferase hexapeptide repeat family. LpxA subfamily. Homotrimer.

The protein resides in the cytoplasm. The enzyme catalyses a (3R)-hydroxyacyl-[ACP] + UDP-N-acetyl-alpha-D-glucosamine = a UDP-3-O-[(3R)-3-hydroxyacyl]-N-acetyl-alpha-D-glucosamine + holo-[ACP]. It functions in the pathway glycolipid biosynthesis; lipid IV(A) biosynthesis; lipid IV(A) from (3R)-3-hydroxytetradecanoyl-[acyl-carrier-protein] and UDP-N-acetyl-alpha-D-glucosamine: step 1/6. In terms of biological role, involved in the biosynthesis of lipid A, a phosphorylated glycolipid that anchors the lipopolysaccharide to the outer membrane of the cell. In Salmonella heidelberg (strain SL476), this protein is Acyl-[acyl-carrier-protein]--UDP-N-acetylglucosamine O-acyltransferase.